A 333-amino-acid chain; its full sequence is Glycerol-3-phosphate dehydrogenase [NAD(P)+] (333 aa).

3 residues coordinate NADPH: W13, K33, and K108. Residues K108 and G138 each contribute to the sn-glycerol 3-phosphate site. S142 is an NADPH binding site. The sn-glycerol 3-phosphate site is built by K193, D246, S256, R257, and N258. The Proton acceptor role is filled by K193. R257 is a binding site for NADPH. NADPH contacts are provided by V281 and E283.

This sequence belongs to the NAD-dependent glycerol-3-phosphate dehydrogenase family.

The protein localises to the cytoplasm. It catalyses the reaction sn-glycerol 3-phosphate + NAD(+) = dihydroxyacetone phosphate + NADH + H(+). The catalysed reaction is sn-glycerol 3-phosphate + NADP(+) = dihydroxyacetone phosphate + NADPH + H(+). It participates in membrane lipid metabolism; glycerophospholipid metabolism. Catalyzes the reduction of the glycolytic intermediate dihydroxyacetone phosphate (DHAP) to sn-glycerol 3-phosphate (G3P), the key precursor for phospholipid synthesis. The sequence is that of Glycerol-3-phosphate dehydrogenase [NAD(P)+] from Bifidobacterium longum subsp. infantis (strain ATCC 15697 / DSM 20088 / JCM 1222 / NCTC 11817 / S12).